A 303-amino-acid chain; its full sequence is tRNA pseudouridine synthase B (303 aa).

Asp53 serves as the catalytic Nucleophile.

The protein belongs to the pseudouridine synthase TruB family. Type 1 subfamily.

It catalyses the reaction uridine(55) in tRNA = pseudouridine(55) in tRNA. Its function is as follows. Responsible for synthesis of pseudouridine from uracil-55 in the psi GC loop of transfer RNAs. The polypeptide is tRNA pseudouridine synthase B (Zymomonas mobilis subsp. mobilis (strain ATCC 31821 / ZM4 / CP4)).